A 402-amino-acid polypeptide reads, in one-letter code: MLQVILNIRLDHKTSDVKTMESSHERMEAIVAELESSGTVMEKVPIRTCNRIEYYLSVQEIPPGFEFDGFTVEGDEDALRHILRLASGLESMIIGEDQILGQIKAARVQALREGTCGPVLDMVFTKAVHVGQTVRRKTQINRGSVSIGSAAVDLAESIHGDLKCRKVLAIGAGKMGTLVARALAEKHLSAIMVANRTYERAYQLACELGGDAIHFDRLNRALRDADVVISATGSPHYILTRERVRDAIPPERRSAVVMVDIANPRDIEESVRELGIRLFTIDDLRGVAEENRRRREAEAREAERIVEGELKLLLRSLKHMEVEPLLAEVRGNMESLRRREAERALNKIMNSSDPEGVIEALSRSIVDKIFHDIAISIRQAAERGDEEFLSMCAKLFNCKDLK.

Substrate is bound by residues 48–51 (TCNR), serine 91, 96–98 (EDQ), and glutamine 102. Catalysis depends on cysteine 49, which acts as the Nucleophile. 171 to 176 (GAGKMG) lines the NADP(+) pocket.

The protein belongs to the glutamyl-tRNA reductase family. Homodimer.

The enzyme catalyses (S)-4-amino-5-oxopentanoate + tRNA(Glu) + NADP(+) = L-glutamyl-tRNA(Glu) + NADPH + H(+). It participates in porphyrin-containing compound metabolism; protoporphyrin-IX biosynthesis; 5-aminolevulinate from L-glutamyl-tRNA(Glu): step 1/2. In terms of biological role, catalyzes the NADPH-dependent reduction of glutamyl-tRNA(Glu) to glutamate 1-semialdehyde (GSA). The polypeptide is Glutamyl-tRNA reductase (Methanothermobacter thermautotrophicus (strain ATCC 29096 / DSM 1053 / JCM 10044 / NBRC 100330 / Delta H) (Methanobacterium thermoautotrophicum)).